The primary structure comprises 415 residues: Serine hydroxymethyltransferase (415 aa).

Residues Leu-117 and 121 to 123 each bind (6S)-5,6,7,8-tetrahydrofolate; that span reads GHL. Position 226 is an N6-(pyridoxal phosphate)lysine (Lys-226).

This sequence belongs to the SHMT family. In terms of assembly, homodimer. Pyridoxal 5'-phosphate serves as cofactor.

Its subcellular location is the cytoplasm. The enzyme catalyses (6R)-5,10-methylene-5,6,7,8-tetrahydrofolate + glycine + H2O = (6S)-5,6,7,8-tetrahydrofolate + L-serine. Its pathway is one-carbon metabolism; tetrahydrofolate interconversion. It functions in the pathway amino-acid biosynthesis; glycine biosynthesis; glycine from L-serine: step 1/1. Functionally, catalyzes the reversible interconversion of serine and glycine with tetrahydrofolate (THF) serving as the one-carbon carrier. This reaction serves as the major source of one-carbon groups required for the biosynthesis of purines, thymidylate, methionine, and other important biomolecules. Also exhibits THF-independent aldolase activity toward beta-hydroxyamino acids, producing glycine and aldehydes, via a retro-aldol mechanism. The sequence is that of Serine hydroxymethyltransferase from Dehalococcoides mccartyi (strain CBDB1).